The following is a 427-amino-acid chain: D-inositol 3-phosphate glycosyltransferase 2 (427 aa).

Residue H14 coordinates 1D-myo-inositol 3-phosphate. UDP-N-acetyl-alpha-D-glucosamine-binding positions include 20 to 21 and G28; that span reads QP. Residues 25-30, K83, Y116, T140, and R160 each bind 1D-myo-inositol 3-phosphate; that span reads DAGGMN. Residues R234, K239, and V300 each contribute to the UDP-N-acetyl-alpha-D-glucosamine site. Residues Y309, R310, and A312 each contribute to the Mg(2+) site. Residues E322 and E330 each coordinate UDP-N-acetyl-alpha-D-glucosamine. T336 contributes to the Mg(2+) binding site.

It belongs to the glycosyltransferase group 1 family. MshA subfamily. Homodimer.

The catalysed reaction is 1D-myo-inositol 3-phosphate + UDP-N-acetyl-alpha-D-glucosamine = 1D-myo-inositol 2-acetamido-2-deoxy-alpha-D-glucopyranoside 3-phosphate + UDP + H(+). Catalyzes the transfer of a N-acetyl-glucosamine moiety to 1D-myo-inositol 3-phosphate to produce 1D-myo-inositol 2-acetamido-2-deoxy-glucopyranoside 3-phosphate in the mycothiol biosynthesis pathway. The polypeptide is D-inositol 3-phosphate glycosyltransferase 2 (Catenulispora acidiphila (strain DSM 44928 / JCM 14897 / NBRC 102108 / NRRL B-24433 / ID139908)).